The chain runs to 424 residues: Anaerobic glycerol-3-phosphate dehydrogenase subunit B (424 aa).

It belongs to the anaerobic G-3-P dehydrogenase subunit B family. In terms of assembly, composed of a catalytic GlpA/B dimer and of membrane bound GlpC. The cofactor is FMN.

The enzyme catalyses a quinone + sn-glycerol 3-phosphate = dihydroxyacetone phosphate + a quinol. It functions in the pathway polyol metabolism; glycerol degradation via glycerol kinase pathway; glycerone phosphate from sn-glycerol 3-phosphate (anaerobic route): step 1/1. Functionally, conversion of glycerol 3-phosphate to dihydroxyacetone. Uses fumarate or nitrate as electron acceptor. This chain is Anaerobic glycerol-3-phosphate dehydrogenase subunit B, found in Yersinia enterocolitica serotype O:8 / biotype 1B (strain NCTC 13174 / 8081).